The sequence spans 328 residues: DNA-directed RNA polymerase subunit alpha (328 aa).

Residues 1–234 form an alpha N-terminal domain (alpha-NTD) region; sequence MQNSTTEFLK…DQMSIFADLQ (234 aa). Positions 248-328 are alpha C-terminal domain (alpha-CTD); it reads IDPVLLRPVD…AWPPVGLEKP (81 aa).

The protein belongs to the RNA polymerase alpha chain family. In terms of assembly, homodimer. The RNAP catalytic core consists of 2 alpha, 1 beta, 1 beta' and 1 omega subunit. When a sigma factor is associated with the core the holoenzyme is formed, which can initiate transcription.

It catalyses the reaction RNA(n) + a ribonucleoside 5'-triphosphate = RNA(n+1) + diphosphate. Functionally, DNA-dependent RNA polymerase catalyzes the transcription of DNA into RNA using the four ribonucleoside triphosphates as substrates. The chain is DNA-directed RNA polymerase subunit alpha from Neisseria meningitidis serogroup A / serotype 4A (strain DSM 15465 / Z2491).